We begin with the raw amino-acid sequence, 1017 residues long: Protein translocase subunit SecA 1 (1017 aa).

ATP is bound by residues glutamine 143, 161–165 (GEGKT), and aspartate 661. The interval 978–999 (GLNDDDEPLPAQPITTEQKPGR) is disordered. Positions 1003, 1005, 1014, and 1015 each coordinate Zn(2+).

Belongs to the SecA family. As to quaternary structure, monomer and homodimer. Part of the essential Sec protein translocation apparatus which comprises SecA, SecYEG and auxiliary proteins SecDF. Other proteins may also be involved. Zn(2+) is required as a cofactor.

The protein resides in the cell inner membrane. The protein localises to the cytoplasm. The enzyme catalyses ATP + H2O + cellular proteinSide 1 = ADP + phosphate + cellular proteinSide 2.. Part of the Sec protein translocase complex. Interacts with the SecYEG preprotein conducting channel. Has a central role in coupling the hydrolysis of ATP to the transfer of proteins into and across the cell membrane, serving as an ATP-driven molecular motor driving the stepwise translocation of polypeptide chains across the membrane. The chain is Protein translocase subunit SecA 1 from Chlorobium chlorochromatii (strain CaD3).